We begin with the raw amino-acid sequence, 419 residues long: Gamma-glutamyl phosphate reductase (419 aa).

The protein belongs to the gamma-glutamyl phosphate reductase family.

The protein localises to the cytoplasm. It catalyses the reaction L-glutamate 5-semialdehyde + phosphate + NADP(+) = L-glutamyl 5-phosphate + NADPH + H(+). Its pathway is amino-acid biosynthesis; L-proline biosynthesis; L-glutamate 5-semialdehyde from L-glutamate: step 2/2. In terms of biological role, catalyzes the NADPH-dependent reduction of L-glutamate 5-phosphate into L-glutamate 5-semialdehyde and phosphate. The product spontaneously undergoes cyclization to form 1-pyrroline-5-carboxylate. The polypeptide is Gamma-glutamyl phosphate reductase (Mannheimia succiniciproducens (strain KCTC 0769BP / MBEL55E)).